Reading from the N-terminus, the 109-residue chain is Nucleoid-associated protein CGSHiEE_00780 (109 aa).

It belongs to the YbaB/EbfC family. In terms of assembly, homodimer.

Its subcellular location is the cytoplasm. It is found in the nucleoid. In terms of biological role, binds to DNA and alters its conformation. May be involved in regulation of gene expression, nucleoid organization and DNA protection. This chain is Nucleoid-associated protein CGSHiEE_00780, found in Haemophilus influenzae (strain PittEE).